A 601-amino-acid chain; its full sequence is Deuterosome assembly protein 1 (601 aa).

3 coiled-coil regions span residues 14 to 59 (CEAE…NAQT), 86 to 196 (TQNY…GKKQ), and 226 to 277 (IEKL…ELQS). The disordered stretch occupies residues 305–329 (AQDNRKRVESSYSPSPKEAERKRKE). Positions 354 to 397 (EEGLCSEQERLRSEISELTQELHQKEVTIATVMKKAALLERQLK) form a coiled coil. Ser-544 carries the post-translational modification Phosphoserine. A coiled-coil region spans residues 555-586 (AAQHFLMEEERRAKELEKLLNTHIDELQRHTE).

Belongs to the CEP63 family. In terms of assembly, interacts with CEP152; the interaction is mutually exclusive with CEP63. Highly enriched in multicilia-abundant tissues (trachea and oviduct).

It is found in the cytoplasm. Key structural component of the deuterosome, a structure that promotes de novo centriole amplification in multiciliated cells. Deuterosome-mediated centriole amplification occurs in terminally differentiated multiciliated cells and can generate more than 100 centrioles. Probably sufficient for the specification and formation of the deuterosome inner core. Interacts with CEP152 and recruits PLK4 to activate centriole biogenesis. In Mus musculus (Mouse), this protein is Deuterosome assembly protein 1.